A 298-amino-acid chain; its full sequence is Olfactory receptor 52Z1P (298 aa).

The Extracellular segment spans residues 1-14 (MGIPGLEGLHTWIS). Residues 15–35 (IPFSFMYIVAVAGNIFLIFLI) form a helical membrane-spanning segment. The Cytoplasmic segment spans residues 36-43 (MTERSLHE). Residues 44 to 64 (PMYLFLSMLASADFLLATAAA) form a helical membrane-spanning segment. Residues 65-85 (PKVLAILWFHSMDISFGSCVS) lie on the Extracellular side of the membrane. Residues cysteine 83 and cysteine 164 are joined by a disulfide bond. A helical membrane pass occupies residues 86 to 106 (QMFFIHFIFVAESAILLAMAF). The Cytoplasmic portion of the chain corresponds to 107-128 (DRYVAICYPLRYTILTSSAVRK). The helical transmembrane segment at 129–149 (IGIAAVVRSFFICCPFIFLVY) threads the bilayer. Over 150-178 (RLTYCGRNIIPHSYCEHIARLACGNINVN) the chain is Extracellular. A helical transmembrane segment spans residues 179–199 (IIYGLTVALLSTGLDIVLIII). The Cytoplasmic portion of the chain corresponds to 200-223 (SYTMILHSVFQISSWAARFKALST). The chain crosses the membrane as a helical span at residues 224–244 (CGSHICVIFMFYTPAFFSFLA). The Extracellular segment spans residues 245–257 (HRFGGKTIPHHIH). Residues 258–278 (ILVGSLYVLVPPMLNPIIYGV) form a helical membrane-spanning segment. Over 279–298 (KTKQIKDRVILLFSPISVCC) the chain is Cytoplasmic.

It belongs to the G-protein coupled receptor 1 family.

The protein resides in the cell membrane. Its function is as follows. Odorant receptor. In Homo sapiens (Human), this protein is Olfactory receptor 52Z1P.